Consider the following 1396-residue polypeptide: Helicase ARIP4 (1396 aa).

The tract at residues 1 to 103 is disordered; it reads MSDASISGSE…LQKPANLRRN (103 aa). The segment covering 11–49 has biased composition (acidic residues); that stretch reads PELDPEDMEEEEEDDEDDDEEEEEEEDEEDNDGDDEDDK. The segment covering 75–84 has biased composition (polar residues); sequence RSTTSGQSGQ. Residues 290 to 510 form the Helicase ATP-binding domain; the sequence is RFSGSSGFGC…WCMVDFVRPD (221 aa). 303 to 310 contributes to the ATP binding site; sequence HSMGLGKT. Positions 461 to 464 match the DEAH box motif; that stretch reads DEGH. The LXXLL motif 1 signature appears at 549–553; that stretch reads LHSLL. Residues 717–891 enclose the Helicase C-terminal domain; sequence KMVLLFHLIE…RVVDDLNPEV (175 aa). Disordered stretches follow at residues 1117 to 1168 and 1194 to 1250; these read SGKQ…PDSP and NLGL…STMN. Composition is skewed to polar residues over residues 1128–1148 and 1218–1238; these read QATSGAQGSSAPYLSNGRHST and DQSSHWPSNKRNPYSQLSYPN. The LXXLL motif 2 signature appears at 1273–1277; sequence LPSLL. Residues 1340-1396 are disordered; that stretch reads GLPTNNPASTFPGYLSSHSNYQASPGTSSRPLPSGETELGSCEEDGRDDDVVEVTGE. Residues 1355 to 1370 are compositionally biased toward polar residues; the sequence is SSHSNYQASPGTSSRP. A compositionally biased stretch (acidic residues) spans 1380–1396; sequence SCEEDGRDDDVVEVTGE.

The protein belongs to the SNF2/RAD54 helicase family.

It is found in the nucleus. It catalyses the reaction ATP + H2O = ADP + phosphate + H(+). In terms of biological role, DNA helicase that modulates androgen receptor (AR)-dependent transactivation in a promoter-dependent manner. This is Helicase ARIP4 (rad54l2) from Xenopus tropicalis (Western clawed frog).